Reading from the N-terminus, the 140-residue chain is HTH-type transcriptional regulator YfmP (140 aa).

Positions 1-73 constitute an HTH merR-type domain; it reads MEWMKIDQVA…LQELQHFMET (73 aa). The H-T-H motif DNA-binding region spans 6 to 25; the sequence is IDQVAKRSGLTKRTIRFYEE.

In terms of biological role, repressor of the yfmOP operon. A mutation in yfmP leads to overexpression of yfmO, probably causing a decrease in cellular copper that is eventually responsible for a reduced copper induction of copZA. The chain is HTH-type transcriptional regulator YfmP (yfmP) from Bacillus subtilis (strain 168).